The chain runs to 210 residues: MPGVKLTTQAYCKMVLHGAKYPHCAVNGLLVAEKQKPRKEHLPLGGPGAHHTLFVDCIPLFHGTLALAPMLEVALTLIDSWCKDHSYVIAGYYQANERVKDASPNQVAEKVASRIAEGFSDTALIMVDNTKFTMDCVAPTIHVYEHHENRWRCRDPHHDYCEDWPEAQRISASLLDSRSYETLVDFDNHLDDIRNDWTNPEINKAVLHLC.

Residues 4-150 form the MPN domain; it reads VKLTTQAYCK…IHVYEHHENR (147 aa).

It belongs to the EMC8/EMC9 family. Component of the ER membrane protein complex (EMC). EMC8 and EMC9 are mutually exclusive subunits of the EMC complex. Expressed in liver, pancreas, heart, lung, kidney, brain, skeletal muscle, and placenta. Expression levels are highest in pancreas and moderate in heart, skeletal muscle, and placenta.

It localises to the endoplasmic reticulum membrane. Part of the endoplasmic reticulum membrane protein complex (EMC) that enables the energy-independent insertion into endoplasmic reticulum membranes of newly synthesized membrane proteins. Preferentially accommodates proteins with transmembrane domains that are weakly hydrophobic or contain destabilizing features such as charged and aromatic residues. Involved in the cotranslational insertion of multi-pass membrane proteins in which stop-transfer membrane-anchor sequences become ER membrane spanning helices. It is also required for the post-translational insertion of tail-anchored/TA proteins in endoplasmic reticulum membranes. By mediating the proper cotranslational insertion of N-terminal transmembrane domains in an N-exo topology, with translocated N-terminus in the lumen of the ER, controls the topology of multi-pass membrane proteins like the G protein-coupled receptors. By regulating the insertion of various proteins in membranes, it is indirectly involved in many cellular processes. This chain is ER membrane protein complex subunit 8 (EMC8), found in Homo sapiens (Human).